The sequence spans 628 residues: Hepatocyte nuclear factor 1-alpha (628 aa).

Positions 1 to 31 are dimerization; sequence MVSKLSQLQTELLAALLESGLSKEALIQALG. The 32-residue stretch at 1-32 folds into the HNF-p1 domain; that stretch reads MVSKLSQLQTELLAALLESGLSKEALIQALGE. Residues 47-79 form a disordered region; that stretch reads GESCGGTRGDLTELPNGLGETRGSEDDTDDDGE. Phosphoserine is present on S70. A Phosphothreonine modification is found at T74. One can recognise a POU-specific atypical domain in the interval 87–182; it reads KELENLSPEE…VAQQFTHAGQ (96 aa). Phosphoserine is present on S93. Residue K117 forms a Glycyl lysine isopeptide (Lys-Gly) (interchain with G-Cter in ubiquitin) linkage. 4 interaction with DNA regions span residues 130-132, 143-149, 155-158, and 203-206; these read QRE, HLSQHLN, KTQK, and RFKW. The tract at residues 183-205 is disordered; sequence GGLIEEPTGDELPTKKGRRNRFK. The Nuclear localization signal signature appears at 197-205; that stretch reads KKGRRNRFK. A DNA-binding region (homeobox; HNF1-type) is located at residues 199–279; the sequence is GRRNRFKWGP…NRRKEEAFRH (81 aa). Residue S247 is modified to Phosphoserine. Interaction with DNA regions lie at residues 263–265 and 270–273; these read RVY and NRRK. 2 disordered regions span residues 284 to 338 and 541 to 585; these read DTYN…SSSG and FTSD…LSTS. Residues 288 to 298 are compositionally biased toward pro residues; that stretch reads GPPPGPGPGPA. The residue at position 313 (S313) is a Phosphoserine. 2 stretches are compositionally biased toward polar residues: residues 324-338 and 558-575; these read QSATSEAAEVPSSSG and SPATTIHIPSQDPSNIQH.

Belongs to the HNF1 homeobox family. Binds DNA as a dimer. Heterotetramer with PCBD1; formed by a dimer of dimers. Interacts with PCBD1. Interacts with BHLHE41. Interacts with NR5A2. Interacts with SPOP; this interaction promotes ubiquitination and degradation of HNF1A. In terms of processing, ubiquitinated in s SPOP-dependent manner; leading to prteasomal degradation. As to expression, liver.

The protein localises to the nucleus. In terms of biological role, transcriptional activator that regulates the tissue specific expression of multiple genes, especially in pancreatic islet cells and in liver. Binds to the inverted palindrome 5'-GTTAATNATTAAC-3'. Activates the transcription of CYP1A2, CYP2E1 and CYP3A11. The sequence is that of Hepatocyte nuclear factor 1-alpha (Hnf1a) from Rattus norvegicus (Rat).